We begin with the raw amino-acid sequence, 322 residues long: Phosphatidylglycerol--prolipoprotein diacylglyceryl transferase (322 aa).

3 consecutive transmembrane segments (helical) span residues 23–43 (VYPIAILMGMIISILTVAFFW), 53–73 (FFALLFIIIPSSIIGARLWFV), and 97–117 (GLSIQGGVALPAILSLVYIYF). Arginine 143 is an a 1,2-diacyl-sn-glycero-3-phospho-(1'-sn-glycerol) binding site. 2 helical membrane-spanning segments follow: residues 191-211 (PLFLYESISSIIGYIIIVWII) and 250-270 (LAAMFSILIGGMMMIYFEIWA).

Belongs to the Lgt family.

The protein localises to the cell membrane. It carries out the reaction L-cysteinyl-[prolipoprotein] + a 1,2-diacyl-sn-glycero-3-phospho-(1'-sn-glycerol) = an S-1,2-diacyl-sn-glyceryl-L-cysteinyl-[prolipoprotein] + sn-glycerol 1-phosphate + H(+). It participates in protein modification; lipoprotein biosynthesis (diacylglyceryl transfer). Functionally, catalyzes the transfer of the diacylglyceryl group from phosphatidylglycerol to the sulfhydryl group of the N-terminal cysteine of a prolipoprotein, the first step in the formation of mature lipoproteins. The protein is Phosphatidylglycerol--prolipoprotein diacylglyceryl transferase of Mycoplasmopsis pulmonis (strain UAB CTIP) (Mycoplasma pulmonis).